A 197-amino-acid polypeptide reads, in one-letter code: Probable nicotinate-nucleotide adenylyltransferase (197 aa).

This sequence belongs to the NadD family.

It catalyses the reaction nicotinate beta-D-ribonucleotide + ATP + H(+) = deamido-NAD(+) + diphosphate. It functions in the pathway cofactor biosynthesis; NAD(+) biosynthesis; deamido-NAD(+) from nicotinate D-ribonucleotide: step 1/1. In terms of biological role, catalyzes the reversible adenylation of nicotinate mononucleotide (NaMN) to nicotinic acid adenine dinucleotide (NaAD). This chain is Probable nicotinate-nucleotide adenylyltransferase, found in Thermosipho melanesiensis (strain DSM 12029 / CIP 104789 / BI429).